The primary structure comprises 134 residues: Methylglyoxal synthase (134 aa).

An MGS-like domain is found at 1 to 134 (MHIALIAHDE…DWRDLRRNDE (134 aa)). Substrate is bound by residues histidine 8, lysine 12, 34-37 (TGTT), and 54-55 (SG). The active-site Proton donor/acceptor is the aspartate 60. Histidine 87 contacts substrate.

It belongs to the methylglyoxal synthase family.

It carries out the reaction dihydroxyacetone phosphate = methylglyoxal + phosphate. In terms of biological role, catalyzes the formation of methylglyoxal from dihydroxyacetone phosphate. The polypeptide is Methylglyoxal synthase (Listeria monocytogenes serotype 4b (strain CLIP80459)).